We begin with the raw amino-acid sequence, 127 residues long: Fluoride-specific ion channel FluC (127 aa).

3 helical membrane passes run 28 to 48 (LALF…SLAM), 73 to 93 (TGVL…ALLI), and 98 to 118 (VGLA…GLFL). The Na(+) site is built by Gly-77 and Thr-80.

Belongs to the fluoride channel Fluc/FEX (TC 1.A.43) family.

It localises to the cell inner membrane. The enzyme catalyses fluoride(in) = fluoride(out). With respect to regulation, na(+) is not transported, but it plays an essential structural role and its presence is essential for fluoride channel function. Functionally, fluoride-specific ion channel. Important for reducing fluoride concentration in the cell, thus reducing its toxicity. The sequence is that of Fluoride-specific ion channel FluC from Beijerinckia indica subsp. indica (strain ATCC 9039 / DSM 1715 / NCIMB 8712).